A 270-amino-acid polypeptide reads, in one-letter code: Mediator of RNA polymerase II transcription subunit 4 (270 aa).

The segment at 1–25 is disordered; sequence MAAASSGEKEKERPGGGLGAAGGNS. The residue at position 2 (Ala-2) is an N-acetylalanine. Coiled coils occupy residues 24-48 and 90-131; these read NSTRERLLSALEDLEVLSRELIEML and HHEM…AKEK. Position 32 is a phosphoserine (Ser-32). The disordered stretch occupies residues 231-270; it reads MLPPNHSHDFLLEPPGHNKENEDDVEVMSTDSSSSSSDSD. Over residues 236 to 250 the composition is skewed to basic and acidic residues; sequence HSHDFLLEPPGHNKE. Residues 259-270 are compositionally biased toward low complexity; it reads STDSSSSSSDSD.

Belongs to the Mediator complex subunit 4 family. In terms of assembly, component of the Mediator complex, which is composed of MED1, MED4, MED6, MED7, MED8, MED9, MED10, MED11, MED12, MED13, MED13L, MED14, MED15, MED16, MED17, MED18, MED19, MED20, MED21, MED22, MED23, MED24, MED25, MED26, MED27, MED29, MED30, MED31, CCNC, CDK8 and CDC2L6/CDK11. The MED12, MED13, CCNC and CDK8 subunits form a distinct module termed the CDK8 module. Mediator containing the CDK8 module is less active than Mediator lacking this module in supporting transcriptional activation. Individual preparations of the Mediator complex lacking one or more distinct subunits have been variously termed ARC, CRSP, DRIP, PC2, SMCC and TRAP.

It localises to the nucleus. Functionally, component of the Mediator complex, a coactivator involved in the regulated transcription of nearly all RNA polymerase II-dependent genes. Mediator functions as a bridge to convey information from gene-specific regulatory proteins to the basal RNA polymerase II transcription machinery. Mediator is recruited to promoters by direct interactions with regulatory proteins and serves as a scaffold for the assembly of a functional preinitiation complex with RNA polymerase II and the general transcription factors. The polypeptide is Mediator of RNA polymerase II transcription subunit 4 (MED4) (Bos taurus (Bovine)).